Here is a 989-residue protein sequence, read N- to C-terminus: E3 ubiquitin-protein ligase Arkadia (989 aa).

Glycyl lysine isopeptide (Lys-Gly) (interchain with G-Cter in SUMO2) cross-links involve residues Lys19, Lys33, Lys46, Lys58, Lys72, Lys86, Lys95, and Lys109. The tract at residues 63–195 (FSHLCDDSQK…TEADPVPSLL (133 aa)) is disordered. Over residues 65–88 (HLCDDSQKQEKDMTGNQQEQEKSG) the composition is skewed to basic and acidic residues. Polar residues predominate over residues 97–109 (QQAGPSYVQNCVK). A compositionally biased stretch (basic and acidic residues) spans 110-120 (ENQEILGRRQQ). A compositionally biased stretch (low complexity) spans 131–144 (SSLSECLSSPSSSL). Residue Lys172 forms a Glycyl lysine isopeptide (Lys-Gly) (interchain with G-Cter in SUMO2) linkage. The span at 173-183 (SRSHSARSHKW) shows a compositional bias: basic residues. Glycyl lysine isopeptide (Lys-Gly) (interchain with G-Cter in SUMO2) cross-links involve residues Lys197 and Lys217. The segment at 213-293 (KRLVKSSSSQ…PSNPAAPSGS (81 aa)) is disordered. The interaction with AXIN1 stretch occupies residues 240–402 (ALAQRKYALL…VPTTSARMDS (163 aa)). Composition is skewed to low complexity over residues 248 to 270 (LLSSSSSSSENDLSSDSSSSSST) and 278 to 291 (ASASENPSNPAAPS). Residues 298–302 (VVVIE) carry the SUMO interaction motif 1 (SIM) motif. Positions 323–329 (EVEIVTV) match the SUMO interaction motif 2 (SIM) motif. The tract at residues 335–367 (SRSTLGHSRSHWSQGSSSHTGRPQESRNRSRIS) is disordered. Low complexity predominate over residues 345–355 (HWSQGSSSHTG). An SUMO interaction motif 3 (SIM) motif is present at residues 380-384 (VVDLT). 3 disordered regions span residues 388-475 (DEPT…MPRL), 506-559 (HGHH…YHDQ), and 641-675 (MPPPYASLTRPLHHQASACHHSHGNAPPQTQPPPQ). Over residues 393-451 (VPTTSARMDSQTTSASINNSNPSTSEQASDTTSTVASSQPSTVSETEATLTSNSATGSS) the composition is skewed to polar residues. A compositionally biased stretch (basic residues) spans 506-520 (HGHHFQHHHHHHHTP). Positions 548 to 558 (ANSSSGSSYHD) are enriched in polar residues. The segment at 902–904 (YPH) is ubiquitin binding. Residues Lys918 and Lys922 each participate in a glycyl lysine isopeptide (Lys-Gly) (interchain with G-Cter in SUMO2) cross-link. Cys937 and Cys940 together coordinate Zn(2+). Residues 937–978 (CTICLSILEEGEDVRRLPCMHLFHQVCVDQWLITNKKCPICR) form an RING-type; atypical zinc finger. The tract at residues 952–956 (RLPCM) is ubiquitin binding. The Zn(2+) site is built by His960 and Cys963.

It belongs to the Arkadia family. As to quaternary structure, monomer. Interacts with SMAD6, SMAD7, AXIN1, AXIN2 and SKIL isoform SNON. Interacts with (phosphorylated) SMAD2 and SMAD3. Part of a complex containing RNF111, AXIN1 and SMAD7. Interacts (via SIM domains) with SUMO1 and SUMO2. In terms of tissue distribution, ubiquitously expressed.

The protein resides in the nucleus. Its subcellular location is the cytoplasm. It localises to the PML body. It carries out the reaction S-ubiquitinyl-[E2 ubiquitin-conjugating enzyme]-L-cysteine + [acceptor protein]-L-lysine = [E2 ubiquitin-conjugating enzyme]-L-cysteine + N(6)-ubiquitinyl-[acceptor protein]-L-lysine.. It functions in the pathway protein modification; protein ubiquitination. Its activity is regulated as follows. Binds free ubiquitin non-covalently via its RING-type zinc finger. Ubiquitin-binding leads to enhance the E3 ubiquitin-protein ligase activity by stabilizing the ubiquitin-conjugating enzyme E2 (donor ubiquitin) in the 'closed' conformation and activating ubiquitin transfer. In terms of biological role, E3 ubiquitin-protein ligase required for mesoderm patterning during embryonic development. Acts as an enhancer of the transcriptional responses of the SMAD2/SMAD3 effectors, which are activated downstream of BMP. Acts by mediating ubiquitination and degradation of SMAD inhibitors such as SMAD7, inducing their proteasomal degradation and thereby enhancing the transcriptional activity of TGF-beta and BMP. In addition to enhance transcription of SMAD2/SMAD3 effectors, also regulates their turnover by mediating their ubiquitination and subsequent degradation, coupling their activation with degradation, thereby ensuring that only effectors 'in use' are degraded. Activates SMAD3/SMAD4-dependent transcription by triggering signal-induced degradation of SNON isoform of SKIL. Associates with UBE2D2 as an E2 enzyme. Specifically binds polysumoylated chains via SUMO interaction motifs (SIMs) and mediates ubiquitination of sumoylated substrates. Catalyzes 'Lys-63'-linked ubiquitination of sumoylated XPC in response to UV irradiation, promoting nucleotide excision repair. Mediates ubiquitination and degradation of sumoylated PML. The regulation of the BMP-SMAD signaling is however independent of sumoylation and is not dependent of SUMO interaction motifs (SIMs). The polypeptide is E3 ubiquitin-protein ligase Arkadia (Mus musculus (Mouse)).